Reading from the N-terminus, the 248-residue chain is Triosephosphate isomerase (248 aa).

Residues Asn10 and Lys12 each coordinate substrate. His95 (electrophile) is an active-site residue. Residue Glu165 is the Proton acceptor of the active site.

This sequence belongs to the triosephosphate isomerase family. Homodimer.

The catalysed reaction is D-glyceraldehyde 3-phosphate = dihydroxyacetone phosphate. It participates in carbohydrate biosynthesis; gluconeogenesis. The protein operates within carbohydrate degradation; glycolysis; D-glyceraldehyde 3-phosphate from glycerone phosphate: step 1/1. The sequence is that of Triosephosphate isomerase (TPI1) from Kluyveromyces marxianus (Yeast).